Consider the following 547-residue polypeptide: Probable protein kinase UbiB (547 aa).

The region spanning 121-501 (EFSPDPMASA…QLRSERRWRR (381 aa)) is the Protein kinase domain. Residues 127–135 (MASASVAQV) and Lys-149 contribute to the ATP site. Asp-284 (proton acceptor) is an active-site residue. The next 2 membrane-spanning stretches (helical) occupy residues 502 to 522 (GFIA…HAGQ) and 523 to 543 (WLAD…GVML).

It belongs to the ABC1 family. UbiB subfamily.

The protein localises to the cell inner membrane. It functions in the pathway cofactor biosynthesis; ubiquinone biosynthesis [regulation]. In terms of biological role, is probably a protein kinase regulator of UbiI activity which is involved in aerobic coenzyme Q (ubiquinone) biosynthesis. The protein is Probable protein kinase UbiB of Marinobacter nauticus (strain ATCC 700491 / DSM 11845 / VT8) (Marinobacter aquaeolei).